The chain runs to 1128 residues: Adipocyte enhancer-binding protein 1 (1128 aa).

An N-terminal signal peptide occupies residues 1–25 (MAAVRTASLLCGLLALLALCPEGSP). Positions 40 to 368 (GFLSEFETQS…PRKGEELEEE (329 aa)) are disordered. Residues 77 to 109 (PRADAEAPPEKNKDKEKKGKKDKGPKAAKHLEG) are compositionally biased toward basic and acidic residues. A compositionally biased stretch (basic residues) spans 113–163 (PTKKPKEKPPKATKKPKEKPPKATKKPKEKPPKATKKPKEKPPKATKRPSA). 2 stretches are compositionally biased toward polar residues: residues 178-187 (RSLTSPSNPG) and 198-209 (TSLNTWQGQGEE). The segment covering 249–261 (RQKQPRPTPSRKR) has biased composition (basic residues). Composition is skewed to basic and acidic residues over residues 267-282 (PEEKTQEPEERKEVDP) and 327-363 (EELKKPKKEGSSPKEDTEDKWAAEKNKDHKAGPRKGE). The 158-residue stretch at 375-532 (IKCPPIGMES…LCMRLEVLGC (158 aa)) folds into the F5/8 type C domain. Residues 382–547 (MESHRIEDNQ…YSYYAQNEVV (166 aa)) are required for DNA-binding and interaction with NFKBIA. Interaction with MAPK1 and MAPK3 regions lie at residues 413 to 616 (AGAN…TAGM) and 998 to 1128 (DPSR…FGDF). N-linked (GlcNAc...) asparagine glycosylation occurs at Asn520. An interaction with PTEN region spans residues 547–977 (VTTDSLDFRH…TQCNFILARS (431 aa)). One can recognise a Peptidase M14 domain in the interval 555 to 896 (RHHSYKDMRQ…EALLTFMEQV (342 aa)). A required for transcriptional repression region spans residues 933–1128 (DYWRILNPGE…ETYTVNFGDF (196 aa)). Residues 1027–1056 (LRRLNSTTGPATSPTPALTLPPSPTPGSTS) form a disordered region. Residues 1030 to 1044 (LNSTTGPATSPTPAL) show a composition bias toward low complexity.

This sequence belongs to the peptidase M14 family. In terms of assembly, interacts with different types of collagen, including collagens I, III, and V. Interacts with GNG5, NFKBIA, MAPK1, MAPK3 and PTEN. May interact with calmodulin. Interaction with MAPK1 may stimulate DNA-binding. Binds to DNA in vitro. In terms of processing, phosphorylated by MAPK1 in vitro. Expressed in aorta.

Its subcellular location is the secreted. As a positive regulator of collagen fibrillogenesis, it is probably involved in the organization and remodeling of the extracellular matrix. May positively regulate MAP-kinase activity in adipocytes, leading to enhanced adipocyte proliferation and reduced adipocyte differentiation. May also positively regulate NF-kappa-B activity in macrophages by promoting the phosphorylation and subsequent degradation of I-kappa-B-alpha (NFKBIA), leading to enhanced macrophage inflammatory responsiveness. Can act as a transcriptional repressor. This Rattus norvegicus (Rat) protein is Adipocyte enhancer-binding protein 1 (Aebp1).